The following is a 274-amino-acid chain: Diaminopimelate epimerase (274 aa).

3 residues coordinate substrate: asparagine 11, glutamine 44, and asparagine 64. Cysteine 73 acts as the Proton donor in catalysis. Substrate-binding positions include 74 to 75 (GN), asparagine 157, asparagine 190, and 208 to 209 (ER). The Proton acceptor role is filled by cysteine 217. A substrate-binding site is contributed by 218-219 (GS).

This sequence belongs to the diaminopimelate epimerase family. Homodimer.

The protein resides in the cytoplasm. The catalysed reaction is (2S,6S)-2,6-diaminopimelate = meso-2,6-diaminopimelate. It functions in the pathway amino-acid biosynthesis; L-lysine biosynthesis via DAP pathway; DL-2,6-diaminopimelate from LL-2,6-diaminopimelate: step 1/1. Catalyzes the stereoinversion of LL-2,6-diaminopimelate (L,L-DAP) to meso-diaminopimelate (meso-DAP), a precursor of L-lysine and an essential component of the bacterial peptidoglycan. This Erwinia tasmaniensis (strain DSM 17950 / CFBP 7177 / CIP 109463 / NCPPB 4357 / Et1/99) protein is Diaminopimelate epimerase.